A 211-amino-acid polypeptide reads, in one-letter code: Thiamine-phosphate synthase (211 aa).

Residues 36–40 and Asn-68 contribute to the 4-amino-2-methyl-5-(diphosphooxymethyl)pyrimidine site; that span reads QLRDK. Positions 69 and 88 each coordinate Mg(2+). Position 107 (Ser-107) interacts with 4-amino-2-methyl-5-(diphosphooxymethyl)pyrimidine. Residue 133 to 135 participates in 2-[(2R,5Z)-2-carboxy-4-methylthiazol-5(2H)-ylidene]ethyl phosphate binding; it reads TKS. A 4-amino-2-methyl-5-(diphosphooxymethyl)pyrimidine-binding site is contributed by Lys-136. Residues Gly-164 and 184–185 contribute to the 2-[(2R,5Z)-2-carboxy-4-methylthiazol-5(2H)-ylidene]ethyl phosphate site; that span reads IS.

It belongs to the thiamine-phosphate synthase family. It depends on Mg(2+) as a cofactor.

The enzyme catalyses 2-[(2R,5Z)-2-carboxy-4-methylthiazol-5(2H)-ylidene]ethyl phosphate + 4-amino-2-methyl-5-(diphosphooxymethyl)pyrimidine + 2 H(+) = thiamine phosphate + CO2 + diphosphate. It catalyses the reaction 2-(2-carboxy-4-methylthiazol-5-yl)ethyl phosphate + 4-amino-2-methyl-5-(diphosphooxymethyl)pyrimidine + 2 H(+) = thiamine phosphate + CO2 + diphosphate. The catalysed reaction is 4-methyl-5-(2-phosphooxyethyl)-thiazole + 4-amino-2-methyl-5-(diphosphooxymethyl)pyrimidine + H(+) = thiamine phosphate + diphosphate. It functions in the pathway cofactor biosynthesis; thiamine diphosphate biosynthesis; thiamine phosphate from 4-amino-2-methyl-5-diphosphomethylpyrimidine and 4-methyl-5-(2-phosphoethyl)-thiazole: step 1/1. Functionally, condenses 4-methyl-5-(beta-hydroxyethyl)thiazole monophosphate (THZ-P) and 2-methyl-4-amino-5-hydroxymethyl pyrimidine pyrophosphate (HMP-PP) to form thiamine monophosphate (TMP). The chain is Thiamine-phosphate synthase from Halalkalibacterium halodurans (strain ATCC BAA-125 / DSM 18197 / FERM 7344 / JCM 9153 / C-125) (Bacillus halodurans).